Here is a 115-residue protein sequence, read N- to C-terminus: Large ribosomal subunit protein bL19 (115 aa).

Belongs to the bacterial ribosomal protein bL19 family.

Functionally, this protein is located at the 30S-50S ribosomal subunit interface and may play a role in the structure and function of the aminoacyl-tRNA binding site. In Buchnera aphidicola subsp. Acyrthosiphon pisum (strain APS) (Acyrthosiphon pisum symbiotic bacterium), this protein is Large ribosomal subunit protein bL19 (rplS).